The sequence spans 572 residues: Probable terpene synthase 11 (572 aa).

Mg(2+)-binding residues include aspartate 317, aspartate 321, and glutamate 469. The DDXXD motif signature appears at 317 to 321 (DDIFD).

Belongs to the terpene synthase family. Mg(2+) is required as a cofactor.

Probable sesquiterpene synthase. In Ricinus communis (Castor bean), this protein is Probable terpene synthase 11 (TPS11).